We begin with the raw amino-acid sequence, 404 residues long: MASPRLGTFCCPTRDAATQLVLSFQPRAFHALCLGSGGLRLALGLLQLLPGRRPAGPGSPATSPPASVRILRAAAACDLLGCLGMVIRSTVWLGFPNFVDSVSDMNHTEIWPAAFCVGSAMWIQLLYSACFWWLFCYAVDAYLVIRRSAGLSTILLYHIMAWGLATLLCVEGAAMLYYPSVSRCERGLDHAIPHYVTMYLPLLLVLVANPILFQKTVTAVASLLKGRQGIYTENERRMGAVIKIRFFKIMLVLIICWLSNIINESLLFYLEMQTDINGGSLKPVRTAAKTTWFIMGILNPAQGFLLSLAFYGWTGCSLGFQSPRKEIQWESLTTSAAEGAHPSPLMPHENPASGKVSQVGGQTSDEALSMLSEGSDASTIEIHTASESCNKNEGDPALPTHGDL.

Residues 1–28 (MASPRLGTFCCPTRDAATQLVLSFQPRA) lie on the Extracellular side of the membrane. Residues 29-49 (FHALCLGSGGLRLALGLLQLL) traverse the membrane as a helical segment. The Cytoplasmic segment spans residues 50–78 (PGRRPAGPGSPATSPPASVRILRAAAACD). Residues 79–99 (LLGCLGMVIRSTVWLGFPNFV) traverse the membrane as a helical segment. Residues 100-124 (DSVSDMNHTEIWPAAFCVGSAMWIQ) are Extracellular-facing. An N-linked (GlcNAc...) asparagine glycan is attached at asparagine 106. Residues 125-145 (LLYSACFWWLFCYAVDAYLVI) traverse the membrane as a helical segment. The Cytoplasmic portion of the chain corresponds to 146–149 (RRSA). Residues 150-170 (GLSTILLYHIMAWGLATLLCV) traverse the membrane as a helical segment. Residues 171-191 (EGAAMLYYPSVSRCERGLDHA) lie on the Extracellular side of the membrane. The helical transmembrane segment at 192 to 212 (IPHYVTMYLPLLLVLVANPIL) threads the bilayer. The Cytoplasmic portion of the chain corresponds to 213 to 248 (FQKTVTAVASLLKGRQGIYTENERRMGAVIKIRFFK). Residues 221-238 (ASLLKGRQGIYTENERRM) form a necessary for its G protein-activation ability and normal distribution of melanosomes region. Residues 222–231 (SLLKGRQGIY) carry the lysosomal/melanosomal membrane localization signal motif. The helical transmembrane segment at 249 to 269 (IMLVLIICWLSNIINESLLFY) threads the bilayer. The Extracellular portion of the chain corresponds to 270–292 (LEMQTDINGGSLKPVRTAAKTTW). A helical membrane pass occupies residues 293-313 (FIMGILNPAQGFLLSLAFYGW). At 314-404 (TGCSLGFQSP…DPALPTHGDL (91 aa)) the chain is on the cytoplasmic side. Residues 329–330 (WE) carry the lysosomal/melanosomal membrane localization signal motif. Residues 338–404 (EGAHPSPLMP…DPALPTHGDL (67 aa)) form a disordered region. Residues 355 to 366 (KVSQVGGQTSDE) are compositionally biased toward polar residues.

It belongs to the G-protein coupled receptor OA family. In terms of assembly, interacts with heterotrimeric G(i) proteins. Interacts with ARRB1 and ARRB2. Interacts with MLANA. In terms of processing, glycosylated. Phosphorylated. As to expression, expressed at high levels in the retina, including the retinal pigment epithelium (RPE), and in melanocytes. Weak expression is observed in brain and adrenal gland.

Its subcellular location is the melanosome membrane. The protein localises to the lysosome membrane. It is found in the apical cell membrane. Its function is as follows. Receptor for tyrosine, L-DOPA and dopamine. After binding to L-DOPA, stimulates Ca(2+) influx into the cytoplasm, increases secretion of the neurotrophic factor SERPINF1 and relocalizes beta arrestin at the plasma membrane; this ligand-dependent signaling occurs through a G(q)-mediated pathway in melanocytic cells. Its activity is mediated by G proteins which activate the phosphoinositide signaling pathway. Also plays a role as an intracellular G protein-coupled receptor involved in melanosome biogenesis, organization and transport. The chain is G-protein coupled receptor 143 (GPR143) from Homo sapiens (Human).